We begin with the raw amino-acid sequence, 160 residues long: Small ribosomal subunit protein uS7 (160 aa).

This sequence belongs to the universal ribosomal protein uS7 family. In terms of assembly, part of the 30S ribosomal subunit. Contacts proteins S9 and S11.

One of the primary rRNA binding proteins, it binds directly to 16S rRNA where it nucleates assembly of the head domain of the 30S subunit. Is located at the subunit interface close to the decoding center, probably blocks exit of the E-site tRNA. The sequence is that of Small ribosomal subunit protein uS7 from Rickettsia akari (strain Hartford).